Here is a 1235-residue protein sequence, read N- to C-terminus: Chitin synthase 4 (1235 aa).

Positions 1–11 (MSLPRRPGPSP) are enriched in pro residues. The disordered stretch occupies residues 1–203 (MSLPRRPGPS…ASKGKREKSG (203 aa)). Residues 1-212 (MSLPRRPGPS…GGLPTPSFWN (212 aa)) lie on the Cytoplasmic side of the membrane. The segment covering 19 to 28 (YRQSGSRRSR) has biased composition (basic residues). Polar residues predominate over residues 46 to 59 (PSQQQRVPSISSFP). Basic and acidic residues predominate over residues 94-107 (IRPERNRIGKDHPN). The segment covering 116–125 (NMNTLPSSTG) has biased composition (polar residues). Basic and acidic residues predominate over residues 169–187 (ETEKSGDERRRRRKSDTTK). Residues 188–199 (HGKIVKASKGKR) are compositionally biased toward basic residues. The helical transmembrane segment at 213 to 233 (IYCGFVTFWCPGFVLKCFGMP) threads the bilayer. At 234–244 (EMAQQRAWREK) the chain is on the extracellular side. Residues 245-265 (MGLISIILLIMGFVGFITFGF) form a helical membrane-spanning segment. The Cytoplasmic segment spans residues 266–514 (TQVVCGKPPL…ASKVVLYVSL (249 aa)). Residues 515–535 (VLILAVVLARFVLALIFQWFI) form a helical membrane-spanning segment. The Extracellular portion of the chain corresponds to 536–1065 (SKTYAAAKTS…SMQFIVGIEL (530 aa)). Positions 545-592 (SQTSDQRKRNRQIEDWTEDIYRAPPRLPGEVGSSVAGSSDRQSKRSSA) are disordered. Over residues 549–558 (DQRKRNRQIE) the composition is skewed to basic and acidic residues. Asparagine 639 is a glycosylation site (N-linked (GlcNAc...) asparagine). The segment at 645-670 (FLKSDAYGSSSSPADGPGPAGFIHEA) is disordered. Residues 648–665 (SDAYGSSSSPADGPGPAG) show a composition bias toward low complexity. Residue asparagine 1034 is glycosylated (N-linked (GlcNAc...) asparagine). The helical transmembrane segment at 1066 to 1086 (IGTLVLPAAIAFTFYVVIISI) threads the bilayer. Residues 1087-1092 (INSPPQ) are Cytoplasmic-facing. A helical transmembrane segment spans residues 1093-1113 (IIPLVLLGLILGLPAILVVVT). Topologically, residues 1114-1116 (AHS) are extracellular. Residues 1117-1137 (WSYIIWMFIYLLSLPVWNFVL) form a helical membrane-spanning segment. The Cytoplasmic segment spans residues 1138 to 1235 (PTYAFWKFDD…RHFDDYFSDA (98 aa)). The tract at residues 1201-1235 (RDNVISGVGGSNGWGSSQPRGHEQGRHFDDYFSDA) is disordered. A compositionally biased stretch (basic and acidic residues) spans 1220–1235 (RGHEQGRHFDDYFSDA).

The protein belongs to the chitin synthase family. Class IV subfamily.

The protein localises to the cell membrane. It catalyses the reaction [(1-&gt;4)-N-acetyl-beta-D-glucosaminyl](n) + UDP-N-acetyl-alpha-D-glucosamine = [(1-&gt;4)-N-acetyl-beta-D-glucosaminyl](n+1) + UDP + H(+). Its function is as follows. Polymerizes chitin, a structural polymer of the cell wall and septum, by transferring the sugar moiety of UDP-GlcNAc to the non-reducing end of the growing chitin polymer. The protein is Chitin synthase 4 (chs-4) of Neurospora crassa (strain ATCC 24698 / 74-OR23-1A / CBS 708.71 / DSM 1257 / FGSC 987).